The following is a 286-amino-acid chain: Interferon-induced 35 kDa protein homolog (286 aa).

Positions 5 to 26 (LQTVLYSLQEEQARLKMRLQEL) are leucine-zipper. NID domains are found at residues 81-170 (ALVT…GDVE) and 183-266 (FADE…GEVE).

The protein belongs to the NMI family. In terms of assembly, homodimer. Also interacts with B-ATF. Interacts with TRIM21. Interacts (via NID domains) with NMI (via NID domains); the interaction is direct and is facilitated by TRIM21. In terms of processing, phosphorylated. Dephosphorylation correlates with the formation of a complex with NMI.

The protein resides in the cytoplasm. Its subcellular location is the nucleus. It is found in the secreted. Its function is as follows. Acts as a signaling pathway regulator involved in innate immune system response. In response to interferon IFN-alpha, associates in a complex with transcriptional regulator NMI to regulate immune response; the complex formation prevents proteasome-mediated degradation of IFI35 and correlates with IFI35 dephosphorylation. In complex with NMI, inhibits virus-triggered type I interferon/IFN-beta production. In complex with NMI, negatively regulates nuclear factor NF-kappa-B signaling by inhibiting the nuclear translocation, activation and transcription of the NF-kappa-B subunit p65/RELA, resulting in the inhibition of endothelial cell proliferation, migration and re-endothelialization of injured arteries. Beside its role as an intracellular signaling pathway regulator, also functions extracellularly as damage-associated molecular patterns (DAMPs) to promote inflammation when actively released by macrophage to the extracellular space during cell injury and pathogen invasion. Macrophage-secreted IFI35 activates NF-kappa-B signaling in adjacent macrophages through Toll-like receptor 4/TLR4 activation, thereby inducing NF-kappa-B translocation from the cytoplasm into the nucleus which promotes the release of pro-inflammatory cytokines. This chain is Interferon-induced 35 kDa protein homolog, found in Mus musculus (Mouse).